The sequence spans 247 residues: Epidermal cell differentiation inhibitor (247 aa).

Residues 1-35 form the signal peptide; that stretch reads MKNKLLFKIFLSLSLALSVYSINDKIIEVSNTSLA. The TR mART core domain occupies 39–247; that stretch reads KNFTDLDEAT…IIITAIVFKK (209 aa). Residues R120, S173, and E215 contribute to the active site.

To ADP-ribosyltransferase C3 of Clostridium.

Its function is as follows. Inhibits terminal differentiation of cultured mouse keratinocytes. In culture, also inhibits the differentiation of human keratinocytes. Probable ADP-ribosyltransferase. The polypeptide is Epidermal cell differentiation inhibitor (Staphylococcus aureus).